Consider the following 466-residue polypeptide: Gamma-aminobutyric acid receptor subunit gamma-2 (466 aa).

Residues 1–38 (MSSPNTWSTGSTVYSPVFSQKMTLWILLLLSLYPGFTS) form the signal peptide. The Extracellular portion of the chain corresponds to 39–274 (QKSDDDYEDY…FDLSRRMGYF (236 aa)). Residues asparagine 51 and asparagine 128 are each glycosylated (N-linked (GlcNAc...) asparagine). Cysteine 189 and cysteine 203 are oxidised to a cystine. Asparagine 246 carries an N-linked (GlcNAc...) asparagine glycan. Residues 275–295 (TIQTYIPCTLIVVLSWVSFWI) traverse the membrane as a helical segment. Topologically, residues 296–301 (NKDAVP) are cytoplasmic. A helical transmembrane segment spans residues 302–321 (ARTSLGITTVLTMTTLSTIA). Over 322 to 333 (RKSLPKVSYVTA) the chain is Extracellular. A helical transmembrane segment spans residues 334–358 (MDLFVSVCFIFVFSALVEYGTLHYF). Over 359-442 (VSNRKPSKDK…IHIRIAKMDS (84 aa)) the chain is Cytoplasmic. A helical membrane pass occupies residues 443–463 (YARIFFPTAFCLFNLVYWVSY). The Extracellular segment spans residues 464–466 (LYL).

It belongs to the ligand-gated ion channel (TC 1.A.9) family. Gamma-aminobutyric acid receptor (TC 1.A.9.5) subfamily. GABRG2 sub-subfamily. In terms of assembly, heteropentamer, formed by a combination of alpha (GABRA1-6), beta (GABRB1-3), gamma (GABRG1-3), delta (GABRD), epsilon (GABRE), rho (GABRR1-3), pi (GABRP) and theta (GABRQ) chains, each subunit exhibiting distinct physiological and pharmacological properties. Interacts with GABARAP. Interacts with KIF21B. Identified in a complex of 720 kDa composed of LHFPL4, NLGN2, GABRA1, GABRB2, GABRG2 and GABRB3. Interacts with LHFPL4. Interacts with SHISA7; interaction leads to the regulation of GABA(A) receptor trafficking, channel deactivation kinetics and pharmacology. Palmitoylated by ZDHHC3/GODZ; required for the accumulation of GABA(A) receptors at the postsynaptic membrane of inhibitory GABAergic synapses. Post-translationally, glycosylated. As to expression, expressed in brain (at protein level). Expressed in lungs, in alveolar epithelium.

Its subcellular location is the postsynaptic cell membrane. The protein localises to the cell membrane. The protein resides in the cell projection. It localises to the dendrite. It is found in the cytoplasmic vesicle membrane. The catalysed reaction is chloride(in) = chloride(out). Its activity is regulated as follows. Allosterically activated by benzodiazepines. Activated by pentobarbital. Inhibited by the antagonist bicuculline. Inhibited by zinc ions. Potentiated by histamine. In terms of biological role, gamma subunit of the heteropentameric ligand-gated chloride channel gated by gamma-aminobutyric acid (GABA), a major inhibitory neurotransmitter in the brain. GABA-gated chloride channels, also named GABA(A) receptors (GABAAR), consist of five subunits arranged around a central pore and contain GABA active binding site(s) located at the alpha and beta subunit interface(s). When activated by GABA, GABAARs selectively allow the flow of chloride anions across the cell membrane down their electrochemical gradient. Gamma-2/GABRG2-containing GABAARs are found at both synaptic and extrasynaptic sites. Chloride influx into the postsynaptic neuron following GABAAR opening decreases the neuron ability to generate a new action potential, thereby reducing nerve transmission. GABAARs containing alpha-1 and beta-2 or -3 subunits exhibit synaptogenic activity; the gamma-2 subunit being necessary but not sufficient to induce rapid synaptic contacts formation. Extrasynaptic gamma-2-containing receptors contribute to the tonic GABAergic inhibition. GABAARs function also as histamine receptor where histamine binds at the interface of two neighboring beta subunits and potentiates GABA response in a gamma-2 subunit-controlled manner. This is Gamma-aminobutyric acid receptor subunit gamma-2 from Rattus norvegicus (Rat).